The primary structure comprises 431 residues: Forkhead box protein P3 (431 aa).

The disordered stretch occupies residues 1-68 (MPNPRPGKPS…SSLNPMPPSQ (68 aa)). Residues 10-25 (SAPSLALGPSPGASPS) are compositionally biased toward low complexity. Residue serine 19 is modified to Phosphoserine; by CDK2. The residue at position 31 (lysine 31) is an N6-acetyllysine. Residues 68–76 (QLQLPTLPL) carry the Nuclear export signal motif. Positions 92–96 (LQALL) match the LXXLL motif motif. The tract at residues 106-190 (LSTVDAHART…STLSAMPQSS (85 aa)) is essential for transcriptional repressor activity and for interaction with KAT5 and HDAC7. Positions 149 to 199 (LPPGINVASLEWVSREPALLCTFPNPGAPRKDSTLSAMPQSSYPLLANGVC) are interaction with IKZF4. The C2H2-type zinc-finger motif lies at 197 to 222 (GVCKWPGCEKVFEEPEDFLKHCQADH). The Nuclear export signal motif lies at 239–248 (VQSLEQQLVL). The segment at 239 to 260 (VQSLEQQLVLEKEKLSAMQAHL) is leucine-zipper. Residues lysine 250 and lysine 252 each participate in a glycyl lysine isopeptide (Lys-Gly) (interchain with G-Cter in ubiquitin) cross-link. An N6-acetyllysine; alternate mark is found at lysine 263 and lysine 268. Residues lysine 263 and lysine 268 each participate in a glycyl lysine isopeptide (Lys-Gly) (interchain with G-Cter in ubiquitin); alternate cross-link. The tract at residues 278–336 (GSCCIVAAGSQGSAVPAWSGPREAPDSLFAVRRHLWGSHGNSTFPEFLHNMDYFKFHNM) is interaction with RUNX1. Positions 337–423 (RPPFTYATLI…RKKRSQRPSR (87 aa)) form a DNA-binding region, fork-head. Lysine 393 participates in a covalent cross-link: Glycyl lysine isopeptide (Lys-Gly) (interchain with G-Cter in ubiquitin). The Nuclear localization signal motif lies at 414 to 417 (RKKR). A Phosphoserine modification is found at serine 418. Residues 418 to 431 (SQRPSRCSNPTPGP) constitute a propeptide that is removed on maturation.

As to quaternary structure, homodimer. Dimerization is essential for its transcriptional regulator activity. Interacts with IKZF3. Interacts (via LXXLL motif) with RORA (via AF-2 motif). Interacts with HDAC9 in the absence of T-cell stimulation. Interacts with PPP1CA, PPP1CB, PPP1CG, KAT5, HDAC7, HSPA8, USP7, STUB1, HSPA1A/B, RUNX1, RUNX2, RUNX3, RELA, NFATC2, IKFZ4 and RORC. Phosphorylation at Ser-418 regulates its transcriptional repressor activity and consequently, regulatory T-cells (Treg) suppressive function. Phosphorylation by CDK2 negatively regulates its transcriptional activity and protein stability. In terms of processing, polyubiquitinated, leading to its proteasomal degradation in regulatory T-cells (Treg) which is mediated by STUB1 in a HSPA1A/B-dependent manner. Deubiquitinated by USP7 and USP44 leading to increase in protein stability. Post-translationally, acetylation on lysine residues stabilizes FOXP3 and promotes differentiation of T-cells into induced regulatory T-cells (iTregs) associated with suppressive functions. Acetylation is mediated by a coordinated action of KAT5 and EP300/p300 acetyltransferases: EP300/p300 is required to enhance KAT5 autoacetylation, promoting acetylation of FOXP3 by KAT5. Deacetylated by SIRT1. Undergoes proteolytic cleavage in activated regulatory T-cells (Treg), and can be cleaved at either the N- or C-terminal site, or at both sites.

It localises to the nucleus. It is found in the cytoplasm. In terms of biological role, transcriptional regulator which is crucial for the development and inhibitory function of regulatory T-cells (Treg). Plays an essential role in maintaining homeostasis of the immune system by allowing the acquisition of full suppressive function and stability of the Treg lineage, and by directly modulating the expansion and function of conventional T-cells. Can act either as a transcriptional repressor or a transcriptional activator depending on its interactions with other transcription factors, histone acetylases and deacetylases. The suppressive activity of Treg involves the coordinate activation of many genes, including CTLA4 and TNFRSF18 by FOXP3 along with repression of genes encoding cytokines such as interleukin-2 (IL2) and interferon-gamma (IFNG). Inhibits cytokine production and T-cell effector function by repressing the activity of two key transcription factors, RELA and NFATC2. Mediates transcriptional repression of IL2 via its association with histone acetylase KAT5 and histone deacetylase HDAC7. Can activate the expression of TNFRSF18, IL2RA and CTLA4 and repress the expression of IL2 and IFNG via its association with transcription factor RUNX1. Inhibits the differentiation of IL17 producing helper T-cells (Th17) by antagonizing RORC function, leading to down-regulation of IL17 expression, favoring Treg development. Inhibits the transcriptional activator activity of RORA. Can repress the expression of IL2 and IFNG via its association with transcription factor IKZF4. The protein is Forkhead box protein P3 (FOXP3) of Macaca fascicularis (Crab-eating macaque).